Here is a 466-residue protein sequence, read N- to C-terminus: Fumarate hydratase class II (466 aa).

Substrate contacts are provided by residues 100-102 (SGT), R128, 131-134 (HPND), 141-143 (SSN), and T189. Residues 122–137 (GERGERRKVHPNDDVN) show a composition bias toward basic and acidic residues. Positions 122-143 (GERGERRKVHPNDDVNKGQSSN) are disordered. The active-site Proton donor/acceptor is H190. S320 is an active-site residue. Substrate contacts are provided by residues S321 and 326–328 (KVN).

Belongs to the class-II fumarase/aspartase family. Fumarase subfamily. As to quaternary structure, homotetramer.

The protein localises to the cytoplasm. It carries out the reaction (S)-malate = fumarate + H2O. It participates in carbohydrate metabolism; tricarboxylic acid cycle; (S)-malate from fumarate: step 1/1. Involved in the TCA cycle. Catalyzes the stereospecific interconversion of fumarate to L-malate. The protein is Fumarate hydratase class II of Myxococcus xanthus (strain DK1622).